Here is a 210-residue protein sequence, read N- to C-terminus: MLTQHVSEARTRGAIHTARLIHTSDLDQETRDGARRMVIEAFRDPSGDSDFTDDFTDDDWDHALGGMHALISHHGALIAHGAVVQRRLMYRGPDGRGHALRCGYVEAVAVREDRRGDGLGTAVLDALEQVIRGAYQIGALSASDIARPMYIARGWLSWEGPTSVLTPTEGIVRTPEDDRSLFVLPVDLPDGLELDTAREITCDWRSGDPW.

Residues 21–189 enclose the N-acetyltransferase domain; sequence IHTSDLDQET…SLFVLPVDLP (169 aa). Residues D54 and 106–107 each bind substrate; that span reads EA. Residues 108 to 110 and 115 to 120 each bind CoA; these read VAV and RGDGLG. Substrate-binding positions include S141 and 176–177; that span reads ED.

This sequence belongs to the AAC(2')-I acetyltransferase family. As to quaternary structure, homodimer.

In terms of biological role, catalyzes the coenzyme A-dependent acetylation of the 2' hydroxyl or amino group of a broad spectrum of aminoglycosides. It confers resistance to aminoglycosides. This chain is Aminoglycoside 2'-N-acetyltransferase (aac), found in Mycolicibacterium smegmatis (strain ATCC 700084 / mc(2)155) (Mycobacterium smegmatis).